Here is a 309-residue protein sequence, read N- to C-terminus: Taste receptor type 2 member 66 (309 aa).

A topological domain (extracellular) is located at residue methionine 1. A helical membrane pass occupies residues 2 to 22 (ITFLPIIFSILIVVTFVIGNF). Topologically, residues 23-46 (ANGFIALANSIEWFKRQKISFADQ) are cytoplasmic. A helical transmembrane segment spans residues 47–67 (ILTALAVPRVGLLWVLLLNWY). The Extracellular portion of the chain corresponds to 68–86 (ATELNPAFYSIEVRITAYN). Residues 87–107 (LWAVINHFSNWLATSLSIFYL) form a helical membrane-spanning segment. Residues 108–126 (LKIANFSNLIFLRLKRRVK) lie on the Cytoplasmic side of the membrane. A helical membrane pass occupies residues 127–147 (SVVLVILLGPLLFLVCHLFVI). Topologically, residues 148–178 (NMNQIIWTKEYEGNMTWKIKLRSAMYLSNTT) are extracellular. Asparagine 161 and asparagine 176 each carry an N-linked (GlcNAc...) asparagine glycan. A helical transmembrane segment spans residues 179 to 199 (VTILANLVPFTVTLISFLLLV). Topologically, residues 200-229 (CSLCKHLKKMQLHGKGSQDPSTKVHIKALQ) are cytoplasmic. A helical membrane pass occupies residues 230-250 (TVISFLLLCAIYFVSVIISVW). Topologically, residues 251 to 259 (SFKNLENKP) are extracellular. A helical transmembrane segment spans residues 260–280 (VFMFCQAIGFSCSSAHPFILI). At 281–309 (WGNKKLKQPFLSVLWQMRYWVKGEKPSSS) the chain is on the cytoplasmic side.

This sequence belongs to the G-protein coupled receptor T2R family.

It is found in the membrane. Receptor that may play a role in the perception of bitterness and is gustducin-linked. May play a role in sensing the chemical composition of the gastrointestinal content. The activity of this receptor may stimulate alpha gustducin, mediate PLC-beta-2 activation and lead to the gating of TRPM5. The polypeptide is Taste receptor type 2 member 66 (TAS2R66) (Pan paniscus (Pygmy chimpanzee)).